A 300-amino-acid chain; its full sequence is Dipeptide transport system permease protein DppC (300 aa).

Topologically, residues 1–31 are cytoplasmic; sequence MSQVTENKVISAPVPMTPLQEFWHYFKRNKG. A helical membrane pass occupies residues 32–52; sequence AVVGLVYVVIVLFIAIFANWI. Residues 53–101 are Periplasmic-facing; that stretch reads APYNPAEQFRDALLAPPAWQEGGSMAHLLGTDDVGRDVLSRLMYGARLS. An ABC transmembrane type-1 domain is found at 98-287; the sequence is ARLSLLVGCL…LTVLAFNLMG (190 aa). A helical transmembrane segment spans residues 102–122; it reads LLVGCLVVVLSLIMGVILGLI. Residues 123-136 are Cytoplasmic-facing; that stretch reads AGYFGGLVDNIIMR. The chain crosses the membrane as a helical span at residues 137-157; sequence VVDIMLALPSLLLALVLVAIF. Over 158–206 the chain is Periplasmic; sequence GPSIGNAALALTFVALPHYVRLTRAAVLVEVNRDYVTASRVAGAGAMRQ. The helical transmembrane segment at 207 to 227 threads the bilayer; it reads MFINIFPNCLAPLIVQASLGF. The Cytoplasmic segment spans residues 228 to 230; it reads SNA. The chain crosses the membrane as a helical span at residues 231–251; the sequence is ILDMAALGFLGMGAQPPTPEW. Residues 252 to 265 are Periplasmic-facing; that stretch reads GTMLSDVLQFAQSA. A helical transmembrane segment spans residues 266 to 286; it reads WWVVTFPGLAILLTVLAFNLM. Residues 287 to 300 lie on the Cytoplasmic side of the membrane; that stretch reads GDGLRDALDPKLKQ.

Belongs to the binding-protein-dependent transport system permease family. OppBC subfamily. In terms of assembly, the complex is composed of two ATP-binding proteins (DppD and DppF), two transmembrane proteins (DppB and DppC) and a solute-binding protein (DppA).

Its subcellular location is the cell inner membrane. In terms of biological role, part of the ABC transporter DppABCDF involved in dipeptide transport. Responsible for the translocation of the substrate across the membrane. The protein is Dipeptide transport system permease protein DppC (dppC) of Escherichia coli O157:H7.